Reading from the N-terminus, the 201-residue chain is Ribonuclease HII (201 aa).

The RNase H type-2 domain maps to 15 to 201 (QRVAGVDEVG…FRPVRRFLEA (187 aa)). A divalent metal cation contacts are provided by D21, E22, and D113.

Belongs to the RNase HII family. It depends on Mn(2+) as a cofactor. Mg(2+) is required as a cofactor.

The protein localises to the cytoplasm. It carries out the reaction Endonucleolytic cleavage to 5'-phosphomonoester.. Its function is as follows. Endonuclease that specifically degrades the RNA of RNA-DNA hybrids. The protein is Ribonuclease HII of Nitrosococcus oceani (strain ATCC 19707 / BCRC 17464 / JCM 30415 / NCIMB 11848 / C-107).